Reading from the N-terminus, the 423-residue chain is Adenylosuccinate synthetase (423 aa).

GTP-binding positions include 12 to 18 (GDEGKGK) and 40 to 42 (GHT). Aspartate 13 acts as the Proton acceptor in catalysis. 2 residues coordinate Mg(2+): aspartate 13 and glycine 40. IMP contacts are provided by residues 13–16 (DEGK), 38–41 (NAGH), threonine 129, arginine 143, glutamine 221, threonine 236, and arginine 300. Histidine 41 (proton donor) is an active-site residue. 296–302 (SVTGRKR) provides a ligand contact to substrate. GTP contacts are provided by residues arginine 302 and 408 to 410 (SVG).

It belongs to the adenylosuccinate synthetase family. As to quaternary structure, homodimer. Mg(2+) is required as a cofactor.

It is found in the cytoplasm. The enzyme catalyses IMP + L-aspartate + GTP = N(6)-(1,2-dicarboxyethyl)-AMP + GDP + phosphate + 2 H(+). It functions in the pathway purine metabolism; AMP biosynthesis via de novo pathway; AMP from IMP: step 1/2. In terms of biological role, plays an important role in the de novo pathway of purine nucleotide biosynthesis. Catalyzes the first committed step in the biosynthesis of AMP from IMP. This is Adenylosuccinate synthetase from Bacteroides thetaiotaomicron (strain ATCC 29148 / DSM 2079 / JCM 5827 / CCUG 10774 / NCTC 10582 / VPI-5482 / E50).